The following is a 262-amino-acid chain: ATP synthase subunit a (262 aa).

Transmembrane regions (helical) follow at residues 26 to 46 (VHID…FVFS), 86 to 106 (VAPL…IDLI), 130 to 150 (DISA…FYTI), 204 to 226 (LIFI…GIPL), and 240 to 260 (LQAF…YNKA).

Belongs to the ATPase A chain family. In terms of assembly, F-type ATPases have 2 components, CF(1) - the catalytic core - and CF(0) - the membrane proton channel. CF(1) has five subunits: alpha(3), beta(3), gamma(1), delta(1), epsilon(1). CF(0) has three main subunits: a(1), b(2) and c(9-12). The alpha and beta chains form an alternating ring which encloses part of the gamma chain. CF(1) is attached to CF(0) by a central stalk formed by the gamma and epsilon chains, while a peripheral stalk is formed by the delta and b chains.

It is found in the cell inner membrane. Its function is as follows. Key component of the proton channel; it plays a direct role in the translocation of protons across the membrane. This is ATP synthase subunit a from Haemophilus influenzae (strain 86-028NP).